Reading from the N-terminus, the 100-residue chain is Urease subunit gamma (100 aa).

This sequence belongs to the urease gamma subunit family. In terms of assembly, heterotrimer of UreA (gamma), UreB (beta) and UreC (alpha) subunits. Three heterotrimers associate to form the active enzyme.

The protein resides in the cytoplasm. It catalyses the reaction urea + 2 H2O + H(+) = hydrogencarbonate + 2 NH4(+). The protein operates within nitrogen metabolism; urea degradation; CO(2) and NH(3) from urea (urease route): step 1/1. In terms of biological role, ureolysis may allow urea to be employed as a nitrogen source for growth and produces ammonia which may protect from killing at low pH. The sequence is that of Urease subunit gamma from Streptococcus salivarius (strain 57.I).